We begin with the raw amino-acid sequence, 81 residues long: Cytochrome b559 subunit alpha (81 aa).

The helical transmembrane segment at 21 to 35 threads the bilayer; sequence VIHSITIPMLFIAGW. H23 contacts heme.

The protein belongs to the PsbE/PsbF family. In terms of assembly, heterodimer of an alpha subunit and a beta subunit. PSII is composed of 1 copy each of membrane proteins PsbA, PsbB, PsbC, PsbD, PsbE, PsbF, PsbH, PsbI, PsbJ, PsbK, PsbL, PsbM, PsbT, PsbX, PsbY, PsbZ, Psb30/Ycf12, peripheral proteins PsbO, CyanoQ (PsbQ), PsbU, PsbV and a large number of cofactors. It forms dimeric complexes. The cofactor is heme b.

Its subcellular location is the cellular thylakoid membrane. Its function is as follows. This b-type cytochrome is tightly associated with the reaction center of photosystem II (PSII). PSII is a light-driven water:plastoquinone oxidoreductase that uses light energy to abstract electrons from H(2)O, generating O(2) and a proton gradient subsequently used for ATP formation. It consists of a core antenna complex that captures photons, and an electron transfer chain that converts photonic excitation into a charge separation. This Rippkaea orientalis (strain PCC 8801 / RF-1) (Cyanothece sp. (strain PCC 8801)) protein is Cytochrome b559 subunit alpha.